We begin with the raw amino-acid sequence, 296 residues long: Probable AP endonuclease (296 aa).

Residues Cys16 and Cys20 are joined by a disulfide bond. Residues His78, His115, Glu142, His182, His218, Asp231, His233, and Glu271 each contribute to the Zn(2+) site.

It belongs to the AP endonuclease 2 family. The cofactor is Zn(2+).

It is found in the host nucleus. It localises to the host cytoplasm. Its subcellular location is the virion. Endonuclease of the viral base excision repair system that catalyzes DNA cleavage reaction at the apurinic or apyrimidinic sites (AP sites). Cleaves phosphodiester bonds on the 5' side of AP sites. In addition to endonuclease activity, the AP endonuclease has a proofreading 3'-5' exonuclease activity that is considerably more efficient in the elimination of a mismatch than in that of a correctly paired base. Displays 3'-phosphatase and 3'-repair diesterase activities. The single nucleotide gaps generated by the AP endonuclease are filled by the viral repair DNA polymerase X and the DNA ligase. This chain is Probable AP endonuclease, found in Ornithodoros (relapsing fever ticks).